Here is a 145-residue protein sequence, read N- to C-terminus: Peptide methionine sulfoxide reductase MsrB (145 aa).

The MsrB domain maps to 6 to 129 (KNERLKQLTD…NSAALRFIPV (124 aa)). Cys-118 functions as the Nucleophile in the catalytic mechanism.

The protein belongs to the MsrB Met sulfoxide reductase family.

It catalyses the reaction L-methionyl-[protein] + [thioredoxin]-disulfide + H2O = L-methionyl-(R)-S-oxide-[protein] + [thioredoxin]-dithiol. This is Peptide methionine sulfoxide reductase MsrB from Listeria welshimeri serovar 6b (strain ATCC 35897 / DSM 20650 / CCUG 15529 / CIP 8149 / NCTC 11857 / SLCC 5334 / V8).